A 180-amino-acid chain; its full sequence is ATP-dependent protease subunit HslV (180 aa).

Threonine 5 is a catalytic residue. Glycine 161, cysteine 164, and threonine 167 together coordinate Na(+).

The protein belongs to the peptidase T1B family. HslV subfamily. As to quaternary structure, a double ring-shaped homohexamer of HslV is capped on each side by a ring-shaped HslU homohexamer. The assembly of the HslU/HslV complex is dependent on binding of ATP.

The protein resides in the cytoplasm. The catalysed reaction is ATP-dependent cleavage of peptide bonds with broad specificity.. Its activity is regulated as follows. Allosterically activated by HslU binding. Protease subunit of a proteasome-like degradation complex believed to be a general protein degrading machinery. The protein is ATP-dependent protease subunit HslV of Campylobacter jejuni subsp. doylei (strain ATCC BAA-1458 / RM4099 / 269.97).